Here is a 264-residue protein sequence, read N- to C-terminus: Acyl-[acyl-carrier-protein]--UDP-N-acetylglucosamine O-acyltransferase (264 aa).

Belongs to the transferase hexapeptide repeat family. LpxA subfamily. Homotrimer.

It localises to the cytoplasm. The enzyme catalyses a (3R)-hydroxyacyl-[ACP] + UDP-N-acetyl-alpha-D-glucosamine = a UDP-3-O-[(3R)-3-hydroxyacyl]-N-acetyl-alpha-D-glucosamine + holo-[ACP]. It participates in glycolipid biosynthesis; lipid IV(A) biosynthesis; lipid IV(A) from (3R)-3-hydroxytetradecanoyl-[acyl-carrier-protein] and UDP-N-acetyl-alpha-D-glucosamine: step 1/6. Functionally, involved in the biosynthesis of lipid A, a phosphorylated glycolipid that anchors the lipopolysaccharide to the outer membrane of the cell. This chain is Acyl-[acyl-carrier-protein]--UDP-N-acetylglucosamine O-acyltransferase, found in Rickettsia peacockii (strain Rustic).